Reading from the N-terminus, the 164-residue chain is Nucleotide-binding protein Emin_0136 (164 aa).

The protein belongs to the YajQ family.

Its function is as follows. Nucleotide-binding protein. The polypeptide is Nucleotide-binding protein Emin_0136 (Elusimicrobium minutum (strain Pei191)).